We begin with the raw amino-acid sequence, 136 residues long: MTERTLILIKPDGVKNGHVGEIISRIEKKGLKLVELDLRTADRETAEKHYAEHSDKPFFGELVDFITSAPLVAGIVEGESAIAAWRQLAGGTHPVEKATPGTIRGDFALTVGENVVHGSDSPESAEREIGIWFPNL.

The ATP site is built by lysine 10, phenylalanine 58, arginine 86, threonine 92, arginine 104, and asparagine 114. Histidine 117 functions as the Pros-phosphohistidine intermediate in the catalytic mechanism.

It belongs to the NDK family. As to quaternary structure, homotetramer. The cofactor is Mg(2+).

It localises to the cytoplasm. It catalyses the reaction a 2'-deoxyribonucleoside 5'-diphosphate + ATP = a 2'-deoxyribonucleoside 5'-triphosphate + ADP. The enzyme catalyses a ribonucleoside 5'-diphosphate + ATP = a ribonucleoside 5'-triphosphate + ADP. In terms of biological role, major role in the synthesis of nucleoside triphosphates other than ATP. The ATP gamma phosphate is transferred to the NDP beta phosphate via a ping-pong mechanism, using a phosphorylated active-site intermediate. The protein is Nucleoside diphosphate kinase of Corynebacterium jeikeium (strain K411).